Reading from the N-terminus, the 320-residue chain is Acetyl-coenzyme A carboxylase carboxyl transferase subunit alpha (320 aa).

In terms of domain architecture, CoA carboxyltransferase C-terminal spans 39 to 293 (ALDAKAAKLL…RGAIAAMLKE (255 aa)).

This sequence belongs to the AccA family. Acetyl-CoA carboxylase is a heterohexamer composed of biotin carboxyl carrier protein (AccB), biotin carboxylase (AccC) and two subunits each of ACCase subunit alpha (AccA) and ACCase subunit beta (AccD).

It localises to the cytoplasm. The catalysed reaction is N(6)-carboxybiotinyl-L-lysyl-[protein] + acetyl-CoA = N(6)-biotinyl-L-lysyl-[protein] + malonyl-CoA. It functions in the pathway lipid metabolism; malonyl-CoA biosynthesis; malonyl-CoA from acetyl-CoA: step 1/1. Component of the acetyl coenzyme A carboxylase (ACC) complex. First, biotin carboxylase catalyzes the carboxylation of biotin on its carrier protein (BCCP) and then the CO(2) group is transferred by the carboxyltransferase to acetyl-CoA to form malonyl-CoA. The sequence is that of Acetyl-coenzyme A carboxylase carboxyl transferase subunit alpha from Ruegeria pomeroyi (strain ATCC 700808 / DSM 15171 / DSS-3) (Silicibacter pomeroyi).